Here is a 292-residue protein sequence, read N- to C-terminus: Ribosomal protein L11 methyltransferase (292 aa).

The S-adenosyl-L-methionine site is built by threonine 136, glycine 159, aspartate 181, and asparagine 228.

It belongs to the methyltransferase superfamily. PrmA family.

It is found in the cytoplasm. It catalyses the reaction L-lysyl-[protein] + 3 S-adenosyl-L-methionine = N(6),N(6),N(6)-trimethyl-L-lysyl-[protein] + 3 S-adenosyl-L-homocysteine + 3 H(+). Functionally, methylates ribosomal protein L11. The protein is Ribosomal protein L11 methyltransferase of Rhizobium rhizogenes (strain K84 / ATCC BAA-868) (Agrobacterium radiobacter).